Reading from the N-terminus, the 162-residue chain is Succinate dehydrogenase assembly factor 2-A, mitochondrial (162 aa).

This sequence belongs to the SDHAF2 family. As to quaternary structure, interacts with the flavoprotein subunit within the SDH catalytic dimer.

Its subcellular location is the mitochondrion matrix. Its function is as follows. Plays an essential role in the assembly of succinate dehydrogenase (SDH), an enzyme complex (also referred to as respiratory complex II) that is a component of both the tricarboxylic acid (TCA) cycle and the mitochondrial electron transport chain, and which couples the oxidation of succinate to fumarate with the reduction of ubiquinone (coenzyme Q) to ubiquinol. Required for flavinylation (covalent attachment of FAD) of the flavoprotein subunit of the SDH catalytic dimer. The polypeptide is Succinate dehydrogenase assembly factor 2-A, mitochondrial (Drosophila yakuba (Fruit fly)).